Consider the following 368-residue polypeptide: MSNAPILLTPGPLTTSTRTRQAMLVDWGSWDRDFNQLTASVCEQLLAIIDGSASHHCVPLQGSGTFAVEAAIGTLVPRDGKVLVLINGAYGQRLAKICKVLGRTFSTFETAEDQPTTAEDVDRLLAADPAVTHVALIHCETSTGILNPLPEIAQVIQRHGKRLIIDAMSSFGALPIDAREVPFEALIAASGKCLEGVPGMGFVFAEKTALAAAEGNAHSLAMDLQDQHAYMAKTGQWRFTPPTHVVAALHEALLQYNEEGGLPARHQRYQDNCQTLLDGMAKIGLHSFLPAEIQAPIIVTFHAPKDPRYQFKDFYERVKAKGFILYPGKLTQVETFRVGCIGVVGAAGMQAAVDAVAEVLREMEVLDI.

The residue at position 192 (lysine 192) is an N6-(pyridoxal phosphate)lysine.

It belongs to the class-V pyridoxal-phosphate-dependent aminotransferase family. PhnW subfamily. As to quaternary structure, homodimer. It depends on pyridoxal 5'-phosphate as a cofactor.

The enzyme catalyses (2-aminoethyl)phosphonate + pyruvate = phosphonoacetaldehyde + L-alanine. In terms of biological role, involved in phosphonate degradation. The chain is 2-aminoethylphosphonate--pyruvate transaminase from Pseudomonas entomophila (strain L48).